The primary structure comprises 412 residues: Aspartate kinase Ask_LysC (412 aa).

The ACT domain occupies 265 to 332; sequence LTIRGVPDTP…QGIAAEMGAR (68 aa).

The protein belongs to the aspartokinase family.

It is found in the cytoplasm. The catalysed reaction is L-aspartate + ATP = 4-phospho-L-aspartate + ADP. It functions in the pathway amino-acid biosynthesis; L-lysine biosynthesis via DAP pathway; (S)-tetrahydrodipicolinate from L-aspartate: step 1/4. Its pathway is amino-acid biosynthesis; L-methionine biosynthesis via de novo pathway; L-homoserine from L-aspartate: step 1/3. It participates in amino-acid biosynthesis; L-threonine biosynthesis; L-threonine from L-aspartate: step 1/5. Its activity is regulated as follows. Allosterically and strongly feedback inhibited by tryptophan. Addition of lysine alone slightly enhances activity. The simultaneous addition of lysine and tryptophan leads to very strong feedback inhibition of the enzyme. The feedback control by tryptophan is reduced in the presence of the compatible solutes hydroxyectoine or ectoine. Its function is as follows. Involved in the biosynthesis of L-aspartate-beta-semialdehyde which is a central intermediate in the biosynthesis of different amino acids (L-lysine, L-methionine, L-threonine). Catalyzes the phosphorylation of the beta-carboxyl group of L-aspartate to yield 4-phospho-L-aspartate. The protein is Aspartate kinase Ask_LysC (lysC) of Stutzerimonas stutzeri (strain A1501) (Pseudomonas stutzeri).